The sequence spans 284 residues: Bifunctional protein FolD 1 (284 aa).

NADP(+) is bound by residues 166–168 and isoleucine 232; that span reads GAS.

This sequence belongs to the tetrahydrofolate dehydrogenase/cyclohydrolase family. Homodimer.

The catalysed reaction is (6R)-5,10-methylene-5,6,7,8-tetrahydrofolate + NADP(+) = (6R)-5,10-methenyltetrahydrofolate + NADPH. It carries out the reaction (6R)-5,10-methenyltetrahydrofolate + H2O = (6R)-10-formyltetrahydrofolate + H(+). The protein operates within one-carbon metabolism; tetrahydrofolate interconversion. Catalyzes the oxidation of 5,10-methylenetetrahydrofolate to 5,10-methenyltetrahydrofolate and then the hydrolysis of 5,10-methenyltetrahydrofolate to 10-formyltetrahydrofolate. This is Bifunctional protein FolD 1 from Ectopseudomonas mendocina (strain ymp) (Pseudomonas mendocina).